Reading from the N-terminus, the 209-residue chain is Protein TIFY 11c (209 aa).

The region spanning 93-128 (EITEKAQLTIFYGGSVVVFDDFPAEKAGELMKLAGS) is the Tify domain. The short motif at 153-177 (PIARKVSLQRFLEKRKNRIVVAEPL) is the Jas element. Positions 155 to 162 (ARKVSLQR) match the Nuclear localization signal motif. The interval 175 to 209 (EPLPESEKKEAESSKRAKKDDGGASWLQVNPTLSL) is disordered. Over residues 179–196 (ESEKKEAESSKRAKKDDG) the composition is skewed to basic and acidic residues.

The protein belongs to the TIFY/JAZ family. Ubiquitinated. Targeted for degradation by the SCF(COI1) E3 ubiquitin ligase-proteasome pathway during jasmonate signaling.

It localises to the nucleus. In terms of biological role, repressor of jasmonate responses. In Oryza sativa subsp. indica (Rice), this protein is Protein TIFY 11c.